A 414-amino-acid chain; its full sequence is Putative competence-damage inducible protein (414 aa).

Belongs to the CinA family.

The protein is Putative competence-damage inducible protein of Geobacillus kaustophilus (strain HTA426).